Reading from the N-terminus, the 648-residue chain is RalA-binding protein 1 (648 aa).

Positions 1–158 (MTECFLPPSS…KKSKDLTAAD (158 aa)) are disordered. Thr-2 is modified (N-acetylthreonine). Over residues 24 to 33 (LTRTPSSEEI) the composition is skewed to polar residues. Residues Ser-29, Ser-30, and Ser-34 each carry the phosphoserine modification. Thr-44 is subject to Phosphothreonine. Phosphoserine is present on residues Ser-48 and Ser-62. Residues 52 to 68 (DVLHEPPDTVSDDDKDH) are compositionally biased toward basic and acidic residues. Position 69-74 (69-74 (GKKKGK)) interacts with ATP. A compositionally biased stretch (basic residues) spans 69–79 (GKKKGKFKKKE). Phosphoserine is present on residues Ser-92 and Ser-93. Residues 102–118 (KVKRSKGIHVFKKPSFS) are compositionally biased toward basic residues. The tract at residues 102 to 119 (KVKRSKGIHVFKKPSFSK) is nuclear localization signal. Residues 119–155 (KKKEKDFKIKEKPKEEKHKEEKHKEEKHKEKKSKDLT) show a composition bias toward basic and acidic residues. The mediates association with membranes and could form transmembrane domains stretch occupies residues 154 to 219 (LTAADVVKQW…PAVFRECVDY (66 aa)). The Rho-GAP domain occupies 192-380 (VPLVDAVERT…VVLKQVTRPL (189 aa)). The segment at 403–499 (RRQEFLLNCL…LTEQEELLAM (97 aa)) is mediates interaction with RALA and RALB. Position 418–425 (418–425 (GGIKDLSK)) interacts with ATP. Phosphoserine occurs at positions 461 and 463. Residues 500–648 (EQFLRRQIAS…PSKDRKETPI (149 aa)) form a mediates interaction with REPS1 and REPS2 region. Disordered stretches follow at residues 525-552 (QSRQ…EEEL) and 598-648 (RAKS…ETPI). A compositionally biased stretch (acidic residues) spans 536 to 552 (EEYSSDSESESEDEEEL). Basic and acidic residues predominate over residues 629-648 (RVAKEQAKASPSKDRKETPI). Residue Ser-638 is modified to Phosphoserine.

In terms of assembly, interacts with the GTP-bound form of RALA (via effector domain); during mitosis, recruits RALBP1 to the mitochondrion where it promotes DNM1L phosphorylation and mitochondrial fission. Interacts with DNM1L; mediates its mitotic kinase cyclin B-CDK1-mediated phosphorylation during mitosis to promote mitochondrial fission. Interacts with the mitotic kinase cyclin B-CDK1 during mitosis. Interacts with the GTP-bound form of RALB (via effector domain). Interacts with REPS1; the interaction is direct and does not affect RALA-binding nor GTPase activator activity of RALBP1. Interacts with REPS2; the interaction is direct and does not affect RALA-binding nor GTPase activator activity of RALBP1. Interacts with EPN1, NUMB and TFAP2A during interphase and mitosis. Interacts with AP2M1; as part of the AP2 complex. Interacts with CDC42. Interacts with RAC1. In terms of processing, tyrosine-phosphorylated upon stimulation of cells with EGF. May undergo proteolytic cleavage to give peptides which reassemble to form a transporter complex. Ubiquitous. The highest level of expression was observed in ovaries and skeletal muscle, whereas the lowest was found in spleen, liver and peripheral blood leukocytes.

Its subcellular location is the cell membrane. It is found in the cytoplasm. The protein localises to the cytosol. It localises to the cytoskeleton. The protein resides in the spindle pole. Its subcellular location is the nucleus. It is found in the mitochondrion. It catalyses the reaction an S-substituted glutathione(in) + ATP + H2O = an S-substituted glutathione(out) + ADP + phosphate + H(+). The catalysed reaction is ATP + H2O + xenobioticSide 1 = ADP + phosphate + xenobioticSide 2.. The enzyme catalyses leukotriene C4(in) + ATP + H2O = leukotriene C4(out) + ADP + phosphate + H(+). In terms of biological role, multifunctional protein that functions as a downstream effector of RALA and RALB. As a GTPase-activating protein/GAP can inactivate CDC42 and RAC1 by stimulating their GTPase activity. As part of the Ral signaling pathway, may also regulate ligand-dependent EGF and insulin receptors-mediated endocytosis. During mitosis, may act as a scaffold protein in the phosphorylation of EPSIN/EPN1 by the mitotic kinase cyclin B-CDK1, preventing endocytosis during that phase of the cell cycle. During mitosis, also controls mitochondrial fission as an effector of RALA. Recruited to mitochondrion by RALA, acts as a scaffold to foster the mitotic kinase cyclin B-CDK1-mediated phosphorylation and activation of DNM1L. Its function is as follows. Could also function as a primary ATP-dependent active transporter for glutathione conjugates of electrophiles. May also actively catalyze the efflux of a wide range of substrates including xenobiotics like doxorubicin (DOX) contributing to cell multidrug resistance. This is RalA-binding protein 1 from Mus musculus (Mouse).